The following is a 369-amino-acid chain: p21-activated protein kinase-interacting protein 1-like (369 aa).

WD repeat units lie at residues 33–70 (AHTA…EHGA), 73–111 (QHNG…CLKS), 114–153 (AHKG…SAFI), 195–233 (TIEK…CLCE), and 236–278 (AREN…NNVP). The segment at 311 to 369 (ATSTEANESEKPSAVKKKKVCGMNKSGKLTKQRRRIVPAKRKLEAPLQKKKKKKQNSSE) is disordered. Basic residues-rich tracts occupy residues 338 to 350 (KLTK…VPAK) and 358 to 369 (QKKKKKKQNSSE).

It is found in the nucleus. The protein localises to the nucleolus. Functionally, negatively regulates the PAK1 kinase. PAK1 is a member of the PAK kinase family, which has been shown to play a positive role in the regulation of signaling pathways involving MAPK8 and RELA. PAK1 exists as an inactive homodimer, which is activated by binding of small GTPases such as CDC42 to an N-terminal regulatory domain. PAK1IP1 also binds to the N-terminus of PAK1, and inhibits the specific activation of PAK1 by CDC42. May be involved in ribosomal large subunit assembly. The polypeptide is p21-activated protein kinase-interacting protein 1-like (PAK1IP1) (Gallus gallus (Chicken)).